A 137-amino-acid chain; its full sequence is MASNPHRSGAGGSLYGGAAPYRSREGLSTRNAAGSEEIQLRIDPMHSDLDDEITGLHGQVRQLKNIAQEIGSEAKFQRDFLDELQMTLIRAQAGVKNNIRKLNMSIIRSGNNHIMHVVLFALLVFFVLYIWSKMFKR.

Topologically, residues 1-113 are cytoplasmic; the sequence is MASNPHRSGA…MSIIRSGNNH (113 aa). The region spanning 43–105 is the t-SNARE coiled-coil homology domain; that stretch reads DPMHSDLDDE…KNNIRKLNMS (63 aa). The helical; Anchor for type IV membrane protein transmembrane segment at 114–134 threads the bilayer; that stretch reads IMHVVLFALLVFFVLYIWSKM. The Vesicular portion of the chain corresponds to 135 to 137; the sequence is FKR.

It belongs to the BET1 family.

The protein resides in the golgi apparatus membrane. It is found in the endoplasmic reticulum membrane. In terms of biological role, required for vesicular transport from the ER to the Golgi complex. Functions as a SNARE associated with ER-derived vesicles. This chain is Bet1-like protein At4g14600, found in Arabidopsis thaliana (Mouse-ear cress).